The primary structure comprises 739 residues: Phosphoribosylformylglycinamidine synthase subunit PurL (739 aa).

Histidine 52 is a catalytic residue. Residues tyrosine 55 and lysine 94 each contribute to the ATP site. Position 96 (glutamate 96) interacts with Mg(2+). Substrate-binding positions include 97–100 (SHNH) and arginine 119. Catalysis depends on histidine 98, which acts as the Proton acceptor. Aspartate 120 provides a ligand contact to Mg(2+). Glutamine 243 contacts substrate. Residue aspartate 271 coordinates Mg(2+). 315 to 317 (ESQ) contributes to the substrate binding site. Aspartate 498 and glycine 535 together coordinate ATP. Asparagine 536 lines the Mg(2+) pocket. Serine 538 is a binding site for substrate.

The protein belongs to the FGAMS family. As to quaternary structure, monomer. Part of the FGAM synthase complex composed of 1 PurL, 1 PurQ and 2 PurS subunits.

It localises to the cytoplasm. It carries out the reaction N(2)-formyl-N(1)-(5-phospho-beta-D-ribosyl)glycinamide + L-glutamine + ATP + H2O = 2-formamido-N(1)-(5-O-phospho-beta-D-ribosyl)acetamidine + L-glutamate + ADP + phosphate + H(+). It functions in the pathway purine metabolism; IMP biosynthesis via de novo pathway; 5-amino-1-(5-phospho-D-ribosyl)imidazole from N(2)-formyl-N(1)-(5-phospho-D-ribosyl)glycinamide: step 1/2. Functionally, part of the phosphoribosylformylglycinamidine synthase complex involved in the purines biosynthetic pathway. Catalyzes the ATP-dependent conversion of formylglycinamide ribonucleotide (FGAR) and glutamine to yield formylglycinamidine ribonucleotide (FGAM) and glutamate. The FGAM synthase complex is composed of three subunits. PurQ produces an ammonia molecule by converting glutamine to glutamate. PurL transfers the ammonia molecule to FGAR to form FGAM in an ATP-dependent manner. PurS interacts with PurQ and PurL and is thought to assist in the transfer of the ammonia molecule from PurQ to PurL. In Caulobacter vibrioides (strain ATCC 19089 / CIP 103742 / CB 15) (Caulobacter crescentus), this protein is Phosphoribosylformylglycinamidine synthase subunit PurL.